The chain runs to 92 residues: Large ribosomal subunit protein bL34m (92 aa).

Residues 1 to 46 constitute a mitochondrion transit peptide; sequence MAFLARCFGCQACRSVALLSGRYLQSRVWMGLPDSWPLLSLQQARG. Ser71 carries the post-translational modification Phosphoserine.

This sequence belongs to the bacterial ribosomal protein bL34 family. Component of the mitochondrial ribosome large subunit (39S) which comprises a 16S rRNA and about 50 distinct proteins.

Its subcellular location is the mitochondrion. This Mus musculus (Mouse) protein is Large ribosomal subunit protein bL34m (Mrpl34).